The chain runs to 360 residues: Histidinol-phosphate aminotransferase (360 aa).

Residue K218 is modified to N6-(pyridoxal phosphate)lysine.

The protein belongs to the class-II pyridoxal-phosphate-dependent aminotransferase family. Histidinol-phosphate aminotransferase subfamily. Homodimer. Pyridoxal 5'-phosphate serves as cofactor.

The catalysed reaction is L-histidinol phosphate + 2-oxoglutarate = 3-(imidazol-4-yl)-2-oxopropyl phosphate + L-glutamate. Its pathway is amino-acid biosynthesis; L-histidine biosynthesis; L-histidine from 5-phospho-alpha-D-ribose 1-diphosphate: step 7/9. This is Histidinol-phosphate aminotransferase from Chlorobium phaeovibrioides (strain DSM 265 / 1930) (Prosthecochloris vibrioformis (strain DSM 265)).